The primary structure comprises 212 residues: Peptide methionine sulfoxide reductase MsrA (212 aa).

The active site involves Cys-52.

Belongs to the MsrA Met sulfoxide reductase family.

The catalysed reaction is L-methionyl-[protein] + [thioredoxin]-disulfide + H2O = L-methionyl-(S)-S-oxide-[protein] + [thioredoxin]-dithiol. The enzyme catalyses [thioredoxin]-disulfide + L-methionine + H2O = L-methionine (S)-S-oxide + [thioredoxin]-dithiol. Its function is as follows. Has an important function as a repair enzyme for proteins that have been inactivated by oxidation. Catalyzes the reversible oxidation-reduction of methionine sulfoxide in proteins to methionine. The polypeptide is Peptide methionine sulfoxide reductase MsrA (Escherichia coli (strain ATCC 8739 / DSM 1576 / NBRC 3972 / NCIMB 8545 / WDCM 00012 / Crooks)).